We begin with the raw amino-acid sequence, 89 residues long: Small ribosomal subunit protein uS15 (89 aa).

This sequence belongs to the universal ribosomal protein uS15 family. As to quaternary structure, part of the 30S ribosomal subunit. Forms a bridge to the 50S subunit in the 70S ribosome, contacting the 23S rRNA.

One of the primary rRNA binding proteins, it binds directly to 16S rRNA where it helps nucleate assembly of the platform of the 30S subunit by binding and bridging several RNA helices of the 16S rRNA. Functionally, forms an intersubunit bridge (bridge B4) with the 23S rRNA of the 50S subunit in the ribosome. The sequence is that of Small ribosomal subunit protein uS15 from Levilactobacillus brevis (strain ATCC 367 / BCRC 12310 / CIP 105137 / JCM 1170 / LMG 11437 / NCIMB 947 / NCTC 947) (Lactobacillus brevis).